Consider the following 420-residue polypeptide: UDP-glucuronic acid decarboxylase 1 (420 aa).

Methionine 1 carries the N-acetylmethionine modification. Topologically, residues 1-19 are cytoplasmic; that stretch reads MVSKGLLRLVSSVNRRRMK. Residues 20-40 traverse the membrane as a helical; Signal-anchor for type II membrane protein segment; the sequence is LLLGIALFAYAASVWGNFVNM. Topologically, residues 41 to 420 are lumenal; that stretch reads RSIQENGELK…RVKKGRTRHS (380 aa). At threonine 94 the chain carries Phosphothreonine. The NAD(+) site is built by glycine 98, phenylalanine 99, valine 100, aspartate 119, asparagine 120, phenylalanine 122, threonine 123, glycine 124, aspartate 144, and valine 145. The UDP-alpha-D-glucuronate site is built by leucine 149 and tyrosine 150. Residues leucine 159 and serine 161 each coordinate NAD(+). Lysine 177 contributes to the UDP-alpha-D-glucuronate binding site. Threonine 178 is an NAD(+) binding site. UDP-alpha-D-glucuronate-binding residues include asparagine 185, glycine 188, lysine 191, and arginine 192. The NAD(+) site is built by alanine 200, tyrosine 231, and lysine 235. Tyrosine 231 functions as the Proton acceptor in the catalytic mechanism. Positions 245, 248, and 249 each coordinate UDP-alpha-D-glucuronate. Threonine 261, histidine 267, and arginine 272 together coordinate NAD(+). Residue asparagine 316 is glycosylated (N-linked (GlcNAc...) asparagine).

This sequence belongs to the NAD(P)-dependent epimerase/dehydratase family. UDP-glucuronic acid decarboxylase subfamily. In terms of assembly, homodimer and homotetramer. Interacts with AKT1. NAD(+) is required as a cofactor.

Its subcellular location is the golgi apparatus. The protein localises to the golgi stack membrane. The catalysed reaction is UDP-alpha-D-glucuronate + H(+) = UDP-alpha-D-xylose + CO2. It participates in nucleotide-sugar biosynthesis; UDP-alpha-D-xylose biosynthesis; UDP-alpha-D-xylose from UDP-alpha-D-glucuronate: step 1/1. In terms of biological role, catalyzes the NAD-dependent decarboxylation of UDP-glucuronic acid to UDP-xylose. Necessary for the biosynthesis of the core tetrasaccharide in glycosaminoglycan biosynthesis. This is UDP-glucuronic acid decarboxylase 1 (Uxs1) from Mus musculus (Mouse).